The sequence spans 473 residues: Probable transporter MCH2 (473 aa).

The Cytoplasmic segment spans residues 1-37 (MSEERHEDHHRDVENKLNLNGKDDINGNTSISIEVPD). Residues 38-58 (GGYGWFILLAFILYNFSTWGA) form a helical membrane-spanning segment. The Extracellular portion of the chain corresponds to 59–83 (NSGYAIYLAHYLENNTFAGGSKLDY). Asn72 carries N-linked (GlcNAc...) asparagine glycosylation. A helical transmembrane segment spans residues 84–105 (ASIGGLAFSCGLFFAPVITWLY). Topologically, residues 106 to 111 (HIFSIQ) are cytoplasmic. A helical membrane pass occupies residues 112–135 (FIIGLGILFQGAALLLAAFSVTLW). Topologically, residues 136 to 141 (EIYLTQ) are extracellular. Residues 142–163 (GVLIGFGLAFIFIPSVTLIPLW) traverse the membrane as a helical segment. At 164-169 (FRNKRS) the chain is on the cytoplasmic side. Residues 170–186 (LASGIGTAGSGLGGIVF) traverse the membrane as a helical segment. Over 187–200 (NLGMQSILQKRGVK) the chain is Extracellular. The chain crosses the membrane as a helical span at residues 201 to 220 (WALIAQCIICTSLSTIALML). The Cytoplasmic segment spans residues 221–243 (TRTTHQGLRQHKRSYKFELLDYD). A helical membrane pass occupies residues 244 to 268 (VLSNFAVWLLFGFVSFAMLGYVVLL). Topologically, residues 269 to 286 (YSLSDFTVSLGYTSKQGS) are extracellular. Residues 287–304 (YVSCMVSVGSLLGRPIVG) traverse the membrane as a helical segment. Residues 305–312 (HIADKYGS) lie on the Cytoplasmic side of the membrane. The chain crosses the membrane as a helical span at residues 313-332 (LTVGMILHLVMAILCWAMWI). Residues 333–342 (PCKNLATAIA) lie on the Extracellular side of the membrane. Residues 343–362 (FGLLVGSIMGTIWPTIASIV) form a helical membrane-spanning segment. The Cytoplasmic portion of the chain corresponds to 363–370 (TRIVGLQK). Residues 371 to 394 (LPGTFGSTWIFMAAFALVAPIIGL) traverse the membrane as a helical segment. At 395–408 (ELRSTDTNGNDYYR) the chain is on the extracellular side. A helical transmembrane segment spans residues 409–433 (TAIFVGFAYFGVSLCQWLLRGFIIA). Residues 434 to 473 (RDEIAVREAYSADQNELHLNVKLSHMSKCLFRYKQLPRRV) lie on the Cytoplasmic side of the membrane.

It belongs to the major facilitator superfamily. Monocarboxylate porter (TC 2.A.1.13) family.

The protein localises to the membrane. Probable transporter. Does not act in the transport of monocarboxylic acids across the plasma membrane. The protein is Probable transporter MCH2 (MCH2) of Saccharomyces cerevisiae (strain ATCC 204508 / S288c) (Baker's yeast).